A 511-amino-acid polypeptide reads, in one-letter code: 2-isopropylmalate synthase (511 aa).

Positions 4–266 constitute a Pyruvate carboxyltransferase domain; it reads IDIFDTTLRD…ETGIQLQEIK (263 aa). Mn(2+) is bound by residues aspartate 13, histidine 201, histidine 203, and asparagine 237. The interval 392-511 is regulatory domain; sequence ELKMVQVQYG…IKESLRAHPV (120 aa).

The protein belongs to the alpha-IPM synthase/homocitrate synthase family. LeuA type 1 subfamily. Homodimer. Mn(2+) serves as cofactor.

Its subcellular location is the cytoplasm. The catalysed reaction is 3-methyl-2-oxobutanoate + acetyl-CoA + H2O = (2S)-2-isopropylmalate + CoA + H(+). Its pathway is amino-acid biosynthesis; L-leucine biosynthesis; L-leucine from 3-methyl-2-oxobutanoate: step 1/4. Functionally, catalyzes the condensation of the acetyl group of acetyl-CoA with 3-methyl-2-oxobutanoate (2-ketoisovalerate) to form 3-carboxy-3-hydroxy-4-methylpentanoate (2-isopropylmalate). The protein is 2-isopropylmalate synthase of Lysinibacillus sphaericus (strain C3-41).